We begin with the raw amino-acid sequence, 184 residues long: Regulatory protein RecX (184 aa).

The segment at 1-21 is disordered; the sequence is MTLFPLPSTSDPAEADESTKR.

Belongs to the RecX family.

The protein localises to the cytoplasm. In terms of biological role, modulates RecA activity. This is Regulatory protein RecX from Mycolicibacterium vanbaalenii (strain DSM 7251 / JCM 13017 / BCRC 16820 / KCTC 9966 / NRRL B-24157 / PYR-1) (Mycobacterium vanbaalenii).